The chain runs to 414 residues: 25-hydroxycholesterol 7-alpha-hydroxylase (414 aa).

Cys354 provides a ligand contact to heme.

The protein belongs to the cytochrome P450 family. Heme is required as a cofactor. In terms of tissue distribution, highly expressed in brain; also expressed in liver and kidney.

Its subcellular location is the endoplasmic reticulum membrane. It localises to the microsome membrane. It catalyses the reaction 25-hydroxycholesterol + reduced [NADPH--hemoprotein reductase] + O2 = 7alpha,25-dihydroxycholesterol + oxidized [NADPH--hemoprotein reductase] + H2O + H(+). It carries out the reaction (25R)-cholest-5-ene-3beta,26-diol + reduced [NADPH--hemoprotein reductase] + O2 = (25R)-cholest-5-en-3beta,7alpha,26-triol + oxidized [NADPH--hemoprotein reductase] + H2O + H(+). It participates in lipid metabolism; bile acid biosynthesis. Its function is as follows. Oxysterol 7alpha-hydroxylase that mediates formation of 7-alpha,25-dihydroxycholesterol (7-alpha,25-OHC) from 25-hydroxycholesterol. Plays a key role in cell positioning and movement in lymphoid tissues: 7-alpha,25-dihydroxycholesterol (7-alpha,25-OHC) acts as a ligand for the G protein-coupled receptor GPR183/EBI2, a chemotactic receptor for a number of lymphoid cells. This Rattus norvegicus (Rat) protein is 25-hydroxycholesterol 7-alpha-hydroxylase (Cyp7b1).